Consider the following 190-residue polypeptide: Peptide deformylase (190 aa).

Fe cation contacts are provided by Cys94 and His136. Glu137 is an active-site residue. His140 is a Fe cation binding site.

This sequence belongs to the polypeptide deformylase family. Fe(2+) is required as a cofactor.

The catalysed reaction is N-terminal N-formyl-L-methionyl-[peptide] + H2O = N-terminal L-methionyl-[peptide] + formate. Its function is as follows. Removes the formyl group from the N-terminal Met of newly synthesized proteins. Requires at least a dipeptide for an efficient rate of reaction. N-terminal L-methionine is a prerequisite for activity but the enzyme has broad specificity at other positions. This is Peptide deformylase from Chlorobium phaeovibrioides (strain DSM 265 / 1930) (Prosthecochloris vibrioformis (strain DSM 265)).